The following is a 339-amino-acid chain: Ferrochelatase (339 aa).

Positions 202 and 283 each coordinate Fe cation.

Belongs to the ferrochelatase family.

Its subcellular location is the cytoplasm. It carries out the reaction heme b + 2 H(+) = protoporphyrin IX + Fe(2+). It functions in the pathway porphyrin-containing compound metabolism; protoheme biosynthesis; protoheme from protoporphyrin-IX: step 1/1. Its function is as follows. Catalyzes the ferrous insertion into protoporphyrin IX. The protein is Ferrochelatase of Psychrobacter cryohalolentis (strain ATCC BAA-1226 / DSM 17306 / VKM B-2378 / K5).